The sequence spans 135 residues: Ribosome-binding factor A (135 aa).

This sequence belongs to the RbfA family. In terms of assembly, monomer. Binds 30S ribosomal subunits, but not 50S ribosomal subunits or 70S ribosomes.

Its subcellular location is the cytoplasm. In terms of biological role, one of several proteins that assist in the late maturation steps of the functional core of the 30S ribosomal subunit. Associates with free 30S ribosomal subunits (but not with 30S subunits that are part of 70S ribosomes or polysomes). Required for efficient processing of 16S rRNA. May interact with the 5'-terminal helix region of 16S rRNA. This chain is Ribosome-binding factor A, found in Hahella chejuensis (strain KCTC 2396).